The sequence spans 381 residues: Diguanylate cyclase DosC (381 aa).

A heme-binding site is contributed by His-98. The GGDEF domain maps to 325-381 (TPLSVLIIDVDKFKEINDTWGHNTGDEILRKVSFLSQKRLVKSKILGAGSSRKLAVS). Residue Asp-333 coordinates Mg(2+). Asn-341 and Asp-350 together coordinate substrate.

Heme serves as cofactor. Requires Mg(2+) as cofactor.

It catalyses the reaction 2 GTP = 3',3'-c-di-GMP + 2 diphosphate. It functions in the pathway purine metabolism; 3',5'-cyclic di-GMP biosynthesis. Globin-coupled heme-based oxygen sensor protein displaying diguanylate cyclase (DGC) activity in response to oxygen availability. Thus, catalyzes the synthesis of cyclic diguanylate (c-di-GMP) via the condensation of 2 GTP molecules. Cyclic-di-GMP is a second messenger which controls cell surface-associated traits in bacteria. This is Diguanylate cyclase DosC (dosC) from Shigella flexneri serotype 5b (strain 8401).